Consider the following 462-residue polypeptide: Alkaline ceramidase TOD1 (462 aa).

At 1 to 18 (MGKFITTTLSPPLYARSK) the chain is on the cytoplasmic side. The chain crosses the membrane as a helical span at residues 19-39 (LLCFSLLYLFSTIFLFLYVSL). Residues 40–462 (SRNQCIFRYS…CKNYLTDMWG (423 aa)) lie on the Lumenal side of the membrane. Residues asparagine 121, asparagine 132, and asparagine 449 are each glycosylated (N-linked (GlcNAc...) asparagine).

This sequence belongs to the alkaline ceramidase family. In terms of tissue distribution, preferentially expressed in pollen grains, pollen tubes and silique guard cells, but barely detectable in roots, stems and leaves.

It localises to the golgi apparatus membrane. It catalyses the reaction an N-acylsphing-4-enine + H2O = sphing-4-enine + a fatty acid. Its pathway is lipid metabolism. Functionally, endoplasmic reticulum ceramidase that catalyzes the hydrolysis of ceramides into sphingosine and free fatty acids at alkaline pH (e.g. pH 9.5). Inactive on phytoceramide. Involved in the regulation of turgor pressure in guard cells and pollen tubes. This Arabidopsis thaliana (Mouse-ear cress) protein is Alkaline ceramidase TOD1.